A 189-amino-acid chain; its full sequence is Putative zinc finger protein ORF189 (189 aa).

The C2H2-type zinc finger occupies 114–137 (YVCPYCVSRFPTVRALKIHLKRRH).

In Acidianus two-tailed virus (ATV), this protein is Putative zinc finger protein ORF189.